Reading from the N-terminus, the 110-residue chain is Non-specific lipid-transfer protein 4 (110 aa).

Positions 1–17 (CVVLVMCMVVIAPMAEG) are cleaved as a signal peptide. Intrachain disulfides connect C21-C68, C31-C45, C46-C91, and C66-C105.

The protein belongs to the plant LTP family.

Plant non-specific lipid-transfer proteins transfer phospholipids as well as galactolipids across membranes. May play a role in wax or cutin deposition in the cell walls of expanding epidermal cells and certain secretory tissues. The polypeptide is Non-specific lipid-transfer protein 4 (Lens culinaris (Lentil)).